Reading from the N-terminus, the 1639-residue chain is RIMS-binding protein 3A (1639 aa).

3 disordered regions span residues 1-22 (MAKD…SSPA), 215-240 (GSPD…CHAP), and 295-364 (SLDS…LTPS). Residues 21 to 143 (PAAAVLENQR…ELQRQLAEEL (123 aa)) adopt a coiled-coil conformation. Residues 326–339 (SPPPSPLPPPPPPS) show a composition bias toward pro residues. 2 coiled-coil regions span residues 409–442 (QADE…QETN) and 480–619 (LAKD…AEEN). Residues 697–811 (CRPGHPPEQP…DRDTASEVDD (115 aa)) form a disordered region. Composition is skewed to polar residues over residues 707 to 718 (WETSQMPESQVK) and 761 to 775 (SVPQ…SQPL). Over residues 776 to 790 (SKKTSSQSNSSSEGS) the composition is skewed to low complexity. The region spanning 832–899 (PKLKIFMAQY…PSNFVEQIPD (68 aa)) is the SH3 1 domain. Fibronectin type-III domains are found at residues 995–1083 (APMQ…TLLA) and 1088–1184 (PPLD…IPED). Disordered regions lie at residues 1251–1273 (PRRQ…GAGS) and 1292–1330 (QKSP…FIHL). Over residues 1293 to 1305 (KSPQNHRPPSVSD) the composition is skewed to polar residues. SH3 domains lie at 1452 to 1520 (TPAR…EMEV) and 1569 to 1636 (WTPK…HMSL).

It belongs to the RIMBP family. As to quaternary structure, interacts with LRGUK (via guanylate kinase-like domain). Interacts (via C-terminus) with HOOK1 (via coiled-coil region).

It is found in the cytoplasm. It localises to the cytoskeleton. Functionally, probable component of the manchette, a microtubule-based structure which plays a key role in sperm head morphogenesis during late stages of sperm development. The protein is RIMS-binding protein 3A (RIMBP3) of Homo sapiens (Human).